The chain runs to 362 residues: Phosphoserine aminotransferase (362 aa).

L-glutamate contacts are provided by serine 9 and arginine 42. Pyridoxal 5'-phosphate contacts are provided by residues 76–77 (GR), tryptophan 102, threonine 153, aspartate 174, and glutamine 197. Lysine 198 carries the N6-(pyridoxal phosphate)lysine modification. 239-240 (NT) contributes to the pyridoxal 5'-phosphate binding site.

Belongs to the class-V pyridoxal-phosphate-dependent aminotransferase family. SerC subfamily. As to quaternary structure, homodimer. It depends on pyridoxal 5'-phosphate as a cofactor.

It localises to the cytoplasm. The enzyme catalyses O-phospho-L-serine + 2-oxoglutarate = 3-phosphooxypyruvate + L-glutamate. It carries out the reaction 4-(phosphooxy)-L-threonine + 2-oxoglutarate = (R)-3-hydroxy-2-oxo-4-phosphooxybutanoate + L-glutamate. Its pathway is amino-acid biosynthesis; L-serine biosynthesis; L-serine from 3-phospho-D-glycerate: step 2/3. It participates in cofactor biosynthesis; pyridoxine 5'-phosphate biosynthesis; pyridoxine 5'-phosphate from D-erythrose 4-phosphate: step 3/5. In terms of biological role, catalyzes the reversible conversion of 3-phosphohydroxypyruvate to phosphoserine and of 3-hydroxy-2-oxo-4-phosphonooxybutanoate to phosphohydroxythreonine. This is Phosphoserine aminotransferase from Klebsiella pneumoniae (strain 342).